The sequence spans 540 residues: CTP synthase (540 aa).

An amidoligase domain region spans residues 1–273 (MNNKDLKTKF…DDFILQHFKL (273 aa)). S19 is a binding site for CTP. S19 is a UTP binding site. 20–25 (SLGKGI) provides a ligand contact to ATP. Y60 contacts L-glutamine. D77 is a binding site for ATP. Residues D77 and E147 each coordinate Mg(2+). CTP is bound by residues 154 to 156 (DIE), 194 to 199 (KTKPTQ), and K230. Residues 194–199 (KTKPTQ) and K230 contribute to the UTP site. The Glutamine amidotransferase type-1 domain maps to 306-539 (YIVLHDAYLS…VEASLLNQKN (234 aa)). G361 serves as a coordination point for L-glutamine. Catalysis depends on C388, which acts as the Nucleophile; for glutamine hydrolysis. L-glutamine contacts are provided by residues 389–392 (LGMQ), E412, and R466. Residues H512 and E514 contribute to the active site.

This sequence belongs to the CTP synthase family. In terms of assembly, homotetramer.

It catalyses the reaction UTP + L-glutamine + ATP + H2O = CTP + L-glutamate + ADP + phosphate + 2 H(+). It carries out the reaction L-glutamine + H2O = L-glutamate + NH4(+). The catalysed reaction is UTP + NH4(+) + ATP = CTP + ADP + phosphate + 2 H(+). It functions in the pathway pyrimidine metabolism; CTP biosynthesis via de novo pathway; CTP from UDP: step 2/2. With respect to regulation, allosterically activated by GTP, when glutamine is the substrate; GTP has no effect on the reaction when ammonia is the substrate. The allosteric effector GTP functions by stabilizing the protein conformation that binds the tetrahedral intermediate(s) formed during glutamine hydrolysis. Inhibited by the product CTP, via allosteric rather than competitive inhibition. Catalyzes the ATP-dependent amination of UTP to CTP with either L-glutamine or ammonia as the source of nitrogen. Regulates intracellular CTP levels through interactions with the four ribonucleotide triphosphates. This chain is CTP synthase, found in Onion yellows phytoplasma (strain OY-M).